A 428-amino-acid chain; its full sequence is L-fucose-proton symporter (428 aa).

12 consecutive transmembrane segments (helical) span residues 10–30 (FIVP…ANDI), 51–71 (LVQL…ALFA), 78–98 (AGIL…WPAA), 100–120 (YEIF…LAFL), 147–167 (FNPL…LTNL), 204–224 (IALG…KMPA), 250–270 (EGVI…TFIV), 288–308 (IIAM…MKYL), 311–331 (EFML…VIFI), 339–359 (CLIL…GIAL), 371–391 (AGLV…GMII), and 401–421 (AVNF…IYGF).

This sequence belongs to the major facilitator superfamily. FHS transporter (TC 2.A.1.7) family.

The protein resides in the cell inner membrane. The enzyme catalyses L-fucose(in) + H(+)(in) = L-fucose(out) + H(+)(out). Functionally, mediates the uptake of L-fucose across the boundary membrane with the concomitant transport of protons into the cell (symport system). The chain is L-fucose-proton symporter (fucP) from Haemophilus influenzae (strain ATCC 51907 / DSM 11121 / KW20 / Rd).